The primary structure comprises 496 residues: Autophagy-related protein 21 (496 aa).

Residues 1–35 form a WD 1 repeat; sequence MKVLQFNQDATCCVVAASSHQISIFNCDPFGKCFE. The segment at 41–86 is disordered; the sequence is SKKKTSNNNGTASNSESRNNEESILITNGSRDRTDAEEEEDNEDNA. The span at 46-57 shows a compositional bias: low complexity; that stretch reads SNNNGTASNSES. Residues 75–84 show a composition bias toward acidic residues; that stretch reads DAEEEEDNED. The stretch at 148–190 is one WD 2 repeat; that stretch reads VMNRKRMCVLLESDQIFIYDISCMKPLETIDLWEDHYKRSQAN. A Phosphothreonine modification is found at T213. S237 is modified (phosphoserine). WD repeat units follow at residues 294-334, 346-385, and 448-488; these read VHKG…DYMS, TRLCNLYQLAFDKSMTMIGCVGDTDTIHLFKLDDASNSLP, and VNES…GECV. The short motif at 342 to 346 is the L/FRRG motif element; that stretch reads FRRGT.

The protein belongs to the WD repeat PROPPIN family.

It localises to the cytoplasm. Its subcellular location is the vacuole membrane. In terms of biological role, required for cytoplasm to vacuole transport (Cvt) vesicles formation and mitophagy. Involved in binding of phosphatidylethanolamine to ATG8 and in recruitment of ATG8 and ATG5 to the pre-autophagosomal structure. Protects ATG8 from ARG4-mediated cleavage. Essential for maturation of proaminopeptidase I. The polypeptide is Autophagy-related protein 21 (ATG21) (Saccharomyces cerevisiae (strain YJM789) (Baker's yeast)).